Reading from the N-terminus, the 518-residue chain is FAD-dependent monooxygenase tpcD (518 aa).

The N-terminal stretch at 1-22 (MQLLGTLSWLYAIQASIGSSKA) is a signal peptide. The N-linked (GlcNAc...) asparagine glycan is linked to Asn61. Positions 75 to 246 (QSAQPACLVH…TRFDLDVFQQ (172 aa)) constitute an FAD-binding PCMH-type domain. The residue at position 112 (His112) is a Pros-8alpha-FAD histidine. Residues Asn163, Asn208, Asn216, and Asn346 are each glycosylated (N-linked (GlcNAc...) asparagine).

Belongs to the oxygen-dependent FAD-linked oxidoreductase family. It depends on FAD as a cofactor.

Its pathway is secondary metabolite biosynthesis; terpenoid biosynthesis. FAD-dependent monooxygenase; part of the gene cluster that mediates the biosynthesis of terpestacin. The bifunctional terpene synthase tpcA converts isopentenyl diphosphate (IPP) and dimethylallyl diphosphate (DMAPP) into the sesterterpene preterpestacin I. The C-terminal prenyltransferase (PT) domain of tpcA catalyzes formation of GFPP, whereas the N-terminal terpene cyclase (TC) domain catalyzes the cyclization of GFPP into preterpestacin I. The cytochrome P450 monooxygenase tpcB then hydroxylates preterpestacin I to yield 24-hydroxypreterpstacin I (renamed as preterpestacin II) whereas the cytochrome P450 monooxygenase tpcC further hydroxylates preterpestacin II to yield 16,17-dihydroxypreterpestacin II (renamed as preterpestacin III). Finally, the FAD-dependent monooxygenase tpcD converts preterpestacin III into terpestacin. The sequence is that of FAD-dependent monooxygenase tpcD from Cochliobolus heterostrophus (strain C5 / ATCC 48332 / race O) (Southern corn leaf blight fungus).